We begin with the raw amino-acid sequence, 300 residues long: Energy-coupling factor transporter ATP-binding protein EcfA2 (300 aa).

Residues 3-258 (IKAKNIVKIY…NKFLIENKML (256 aa)) form the ABC transporter domain. 40 to 47 (GQTGSGKT) is an ATP binding site.

Belongs to the ABC transporter superfamily. Energy-coupling factor EcfA family. Forms a stable energy-coupling factor (ECF) transporter complex composed of 2 membrane-embedded substrate-binding proteins (S component), 2 ATP-binding proteins (A component) and 2 transmembrane proteins (T component).

It localises to the cell membrane. In terms of biological role, ATP-binding (A) component of a common energy-coupling factor (ECF) ABC-transporter complex. Unlike classic ABC transporters this ECF transporter provides the energy necessary to transport a number of different substrates. In Mesomycoplasma hyopneumoniae (strain 232) (Mycoplasma hyopneumoniae), this protein is Energy-coupling factor transporter ATP-binding protein EcfA2.